A 440-amino-acid polypeptide reads, in one-letter code: Beta-1,3-galactosyl-O-glycosyl-glycoprotein beta-1,6-N-acetylglucosaminyltransferase (440 aa).

Over 1 to 9 (MKMAGWKKK) the chain is Cytoplasmic. Residues 10–30 (LCPGHHLWALGCYMLLAVVSL) traverse the membrane as a helical; Signal-anchor for type II membrane protein segment. The Lumenal segment spans residues 31–440 (RLSLRFKCDV…RHKAIYGTEL (410 aa)). Asn-72 and Asn-108 each carry an N-linked (GlcNAc...) asparagine; by host glycan. 4 disulfide bridges follow: Cys-73–Cys-230, Cys-164–Cys-384, Cys-185–Cys-212, and Cys-393–Cys-425.

This sequence belongs to the glycosyltransferase 14 family.

It localises to the host Golgi apparatus membrane. The enzyme catalyses a 3-O-[beta-D-galactosyl-(1-&gt;3)-N-acetyl-alpha-D-galactosaminyl]-L-seryl-[protein] + UDP-N-acetyl-alpha-D-glucosamine = 3-O-{beta-D-galactosyl-(1-&gt;3)-[N-acetyl-beta-D-glucosaminyl-(1-&gt;6)]-N-acetyl-alpha-D-galactosaminyl}-L-seryl-[protein] + UDP + H(+). It carries out the reaction a 3-O-[beta-D-galactosyl-(1-&gt;3)-N-acetyl-alpha-D-galactosaminyl]-L-threonyl-[protein] + UDP-N-acetyl-alpha-D-glucosamine = a 3-O-{beta-D-galactosyl-(1-&gt;3)-[N-acetyl-beta-D-glucosaminyl-(1-&gt;6)]-N-acetyl-alpha-D-galactosaminyl}-L-threonyl-[protein] + UDP + H(+). It catalyses the reaction a beta-D-Gal-(1-&gt;4)-beta-D-GlcNAc-(1-&gt;3)-beta-D-Gal-(1-&gt;4)-beta-D-GlcNAc derivative + UDP-N-acetyl-alpha-D-glucosamine = a beta-D-Gal-(1-&gt;4)-beta-D-GlcNAc-(1-&gt;3)-[beta-D-GlcNAc-(1-&gt;6)]-beta-D-Gal-(1-&gt;4)-N-acetyl-beta-D-glucosaminyl derivative + UDP + H(+). The catalysed reaction is 3-O-[N-acetyl-beta-D-glucosaminyl-(1-&gt;3)-N-acetyl-alpha-D-galactosaminyl]-L-seryl-[protein] + UDP-N-acetyl-alpha-D-glucosamine = 3-O-[N-acetyl-beta-D-glucosaminyl-(1-&gt;3)-[N-acetyl-beta-D-glucosaminyl-(1-&gt;6)]-N-acetyl-alpha-D-galactosaminyl]-L-seryl-[protein] + UDP + H(+). The enzyme catalyses a 3-O-[N-acetyl-beta-D-glucosaminyl-(1-&gt;3)-N-acetyl-alpha-D-galactosaminyl]-L-threonyl-[protein] + UDP-N-acetyl-alpha-D-glucosamine = 3-O-[N-acetyl-beta-D-glucosaminyl-(1-&gt;3)-[N-acetyl-beta-D-glucosaminyl-(1-&gt;6)]-N-acetyl-alpha-D-galactosaminyl]-L-threonyl-[protein] + UDP + H(+). It functions in the pathway protein modification; protein glycosylation. Its function is as follows. Non-essential glycosyltransferase that can synthesize all known mucin beta 6 N-acetylglucosaminides. Mediates core 2 and core 4 O-glycan branching, 2 important steps in mucin-type biosynthesis. Has also I-branching enzyme activity by converting linear into branched poly-N-acetyllactosaminoglycans. Contributes to the post-translational modifications of structural proteins. This Bovine herpesvirus 4 (strain V. test) (BoHV-4) protein is Beta-1,3-galactosyl-O-glycosyl-glycoprotein beta-1,6-N-acetylglucosaminyltransferase (Bo17).